The chain runs to 253 residues: Sulfate transporter CysZ (253 aa).

4 consecutive transmembrane segments (helical) span residues 31-51, 75-95, 151-171, and 222-242; these read FVILPLLVNILLMGGAFWWLF, LLWPLAVISVLLVFGYFFSTI, IVLLILYFIPGIGQTVAPVLW, and IPLLNLFIMPVAVCGATAMWV.

It belongs to the CysZ family.

Its subcellular location is the cell inner membrane. Its function is as follows. High affinity, high specificity proton-dependent sulfate transporter, which mediates sulfate uptake. Provides the sulfur source for the cysteine synthesis pathway. This is Sulfate transporter CysZ from Escherichia coli O7:K1 (strain IAI39 / ExPEC).